Here is a 304-residue protein sequence, read N- to C-terminus: MKTEHAKPLMTPEPNSPPPEDQYTAVSPWREAFKQLKKNKLAIVGLIIITSFILIAIFAPLLTSSSYAETNPSNRLQGPSAEHWFGTDDFGRDIFTRIVYGARLSLQVGFFAVTGALIFGTTLGLIAGYYGRWIDMLISRIFDIMLAFPSILLAIAIVAILGPSLQNALIAIAIVNVPIFGRLVRSKVISLREEEFIMAAKAQGMKNGRIIFHHILPNSLAPIIVQATLGFGTAILEAAALGFLGLGAQAPMPEWGKMLSDSRQFIQSAPWTVLFPGFSIMLVVLGFNMIGDGLRDALDPKMKS.

The disordered stretch occupies residues 1–24; it reads MKTEHAKPLMTPEPNSPPPEDQYT. 6 helical membrane-spanning segments follow: residues 41-61, 108-128, 141-161, 164-184, 227-247, and 271-291; these read LAIV…FAPL, VGFF…LIAG, IFDI…VAIL, SLQN…GRLV, ATLG…LGLG, and WTVL…NMIG. The ABC transmembrane type-1 domain occupies 102–291; the sequence is ARLSLQVGFF…LVVLGFNMIG (190 aa).

Belongs to the binding-protein-dependent transport system permease family. OppBC subfamily.

The protein resides in the cell membrane. Probably part of the ABC transporter Dpp involved in dipeptide transport. Responsible for the translocation of the substrate across the membrane. The protein is Dipeptide transport system permease protein DppC (dppC) of Alkalihalophilus pseudofirmus (strain ATCC BAA-2126 / JCM 17055 / OF4) (Bacillus pseudofirmus).